Here is a 96-residue protein sequence, read N- to C-terminus: Aspartyl/glutamyl-tRNA(Asn/Gln) amidotransferase subunit C (96 aa).

Belongs to the GatC family. As to quaternary structure, heterotrimer of A, B and C subunits.

The enzyme catalyses L-glutamyl-tRNA(Gln) + L-glutamine + ATP + H2O = L-glutaminyl-tRNA(Gln) + L-glutamate + ADP + phosphate + H(+). The catalysed reaction is L-aspartyl-tRNA(Asn) + L-glutamine + ATP + H2O = L-asparaginyl-tRNA(Asn) + L-glutamate + ADP + phosphate + 2 H(+). Allows the formation of correctly charged Asn-tRNA(Asn) or Gln-tRNA(Gln) through the transamidation of misacylated Asp-tRNA(Asn) or Glu-tRNA(Gln) in organisms which lack either or both of asparaginyl-tRNA or glutaminyl-tRNA synthetases. The reaction takes place in the presence of glutamine and ATP through an activated phospho-Asp-tRNA(Asn) or phospho-Glu-tRNA(Gln). The protein is Aspartyl/glutamyl-tRNA(Asn/Gln) amidotransferase subunit C of Herpetosiphon aurantiacus (strain ATCC 23779 / DSM 785 / 114-95).